A 277-amino-acid chain; its full sequence is Large ribosomal subunit protein uL2 (277 aa).

The segment at 219–277 (RPQTRGSAMNPVDHPHGGGEGKKNSGRHPVTPWGKPTKGAKTRRKKASDKLIISRRKGK) is disordered. A compositionally biased stretch (basic and acidic residues) spans 231–241 (DHPHGGGEGKK). The span at 256 to 277 (KGAKTRRKKASDKLIISRRKGK) shows a compositional bias: basic residues.

This sequence belongs to the universal ribosomal protein uL2 family. As to quaternary structure, part of the 50S ribosomal subunit. Forms a bridge to the 30S subunit in the 70S ribosome.

One of the primary rRNA binding proteins. Required for association of the 30S and 50S subunits to form the 70S ribosome, for tRNA binding and peptide bond formation. It has been suggested to have peptidyltransferase activity; this is somewhat controversial. Makes several contacts with the 16S rRNA in the 70S ribosome. The sequence is that of Large ribosomal subunit protein uL2 from Campylobacter curvus (strain 525.92).